The following is a 299-amino-acid chain: Ribosomal RNA small subunit methyltransferase H (299 aa).

Residues 36–38 (GGH), aspartate 55, aspartate 103, and glutamine 110 contribute to the S-adenosyl-L-methionine site. Composition is skewed to basic and acidic residues over residues 268-282 (KPVR…ENPR) and 289-299 (RAAERIEKGGD). The disordered stretch occupies residues 268 to 299 (KPVRPSEEEIRENPRARSGRLRAAERIEKGGD).

The protein belongs to the methyltransferase superfamily. RsmH family.

Its subcellular location is the cytoplasm. The catalysed reaction is cytidine(1402) in 16S rRNA + S-adenosyl-L-methionine = N(4)-methylcytidine(1402) in 16S rRNA + S-adenosyl-L-homocysteine + H(+). Specifically methylates the N4 position of cytidine in position 1402 (C1402) of 16S rRNA. In Thermotoga petrophila (strain ATCC BAA-488 / DSM 13995 / JCM 10881 / RKU-1), this protein is Ribosomal RNA small subunit methyltransferase H.